Consider the following 242-residue polypeptide: Probable transcriptional regulatory protein mhp472 (242 aa).

It belongs to the TACO1 family.

The protein resides in the cytoplasm. The sequence is that of Probable transcriptional regulatory protein mhp472 from Mesomycoplasma hyopneumoniae (strain 232) (Mycoplasma hyopneumoniae).